A 301-amino-acid chain; its full sequence is Ornithine carbamoyltransferase (301 aa).

Carbamoyl phosphate-binding positions include R100 and H127 to Q130. L-ornithine-binding positions include N158, D221, and S225–M226. Residues C260 and R288 each contribute to the carbamoyl phosphate site.

It belongs to the aspartate/ornithine carbamoyltransferase superfamily. OTCase family.

The protein localises to the cytoplasm. The catalysed reaction is carbamoyl phosphate + L-ornithine = L-citrulline + phosphate + H(+). Its pathway is amino-acid biosynthesis; L-arginine biosynthesis; L-arginine from L-ornithine and carbamoyl phosphate: step 1/3. Reversibly catalyzes the transfer of the carbamoyl group from carbamoyl phosphate (CP) to the N(epsilon) atom of ornithine (ORN) to produce L-citrulline. The chain is Ornithine carbamoyltransferase (argF) from Vibrio sp. (strain 2693).